Reading from the N-terminus, the 124-residue chain is uncharacterized protein (124 aa).

This is an uncharacterized protein from Haemophilus influenzae (strain ATCC 51907 / DSM 11121 / KW20 / Rd).